The primary structure comprises 302 residues: MKVIFMGTPEFAVPALKKLITHHEVKAVFTQQPKAKGRGLNLAKSPIHQLAFEHQIPVYTPSTLRNDVINLINKVNADIIVVIAYGFIVPQAILEAKKYGCLNIHPSDLPRHRGAAPLQRTIIEGDRKSSVCIMRMDTGLDTGDILMKEDFDLEERTTLEELHNKCANLGAELLIKILANIDNIVPIKQSSDGVTYAHKLTKEEGKINWHESAYKIDCKIRGMNPWPGAYFSYNDKIIKILEAEYLNADHHFTSGTVISDKLEIACGSGILRVKKLQQESKKALNIEEFLRGTNILKDTVLK.

107 to 110 contributes to the (6S)-5,6,7,8-tetrahydrofolate binding site; the sequence is SDLP.

This sequence belongs to the Fmt family.

It catalyses the reaction L-methionyl-tRNA(fMet) + (6R)-10-formyltetrahydrofolate = N-formyl-L-methionyl-tRNA(fMet) + (6S)-5,6,7,8-tetrahydrofolate + H(+). Attaches a formyl group to the free amino group of methionyl-tRNA(fMet). The formyl group appears to play a dual role in the initiator identity of N-formylmethionyl-tRNA by promoting its recognition by IF2 and preventing the misappropriation of this tRNA by the elongation apparatus. The polypeptide is Methionyl-tRNA formyltransferase (Rickettsia massiliae (strain Mtu5)).